We begin with the raw amino-acid sequence, 444 residues long: Aflatoxin biosynthesis regulatory protein (444 aa).

Residues 1–26 (MVDHISPRASPGPIRSSQTRRARKLR) form a disordered region. A DNA-binding region (zn(2)-C6 fungal-type) is located at residues 29–56 (CTSCASSKVRCTKEKPACARCIERGLAC). Residues 64-167 (MGRNPRAPSP…QGLGGDLAGQ (104 aa)) are disordered. The span at 106–116 (TQAHTHAHSHP) shows a compositional bias: basic residues. The span at 120-130 (PQSHPQSNQPP) shows a compositional bias: low complexity. Over residues 136–149 (PNGSSSVSAIFSHQ) the composition is skewed to polar residues.

It is found in the nucleus. The protein operates within mycotoxin biosynthesis; aflatoxin biosynthesis. Involved in the regulation of aflatoxin biosynthesis. May have a role in nitrate assimilation and sclerotial morphogenesis. The chain is Aflatoxin biosynthesis regulatory protein (aflR) from Aspergillus parasiticus.